The primary structure comprises 385 residues: Cotranscriptional regulator ARB2A homolog (385 aa).

2 disordered regions span residues 1 to 65 (MSDI…NGEE) and 220 to 239 (EEQK…NGKL). Positions 52–62 (NNNNNNSNNSN) are enriched in low complexity. Positions 220–238 (EEQKEKAKEEEEKKDDNGK) are enriched in basic and acidic residues.

Belongs to the ARB2A family.

The polypeptide is Cotranscriptional regulator ARB2A homolog (Dictyostelium discoideum (Social amoeba)).